A 723-amino-acid polypeptide reads, in one-letter code: Malate synthase G (723 aa).

Acetyl-CoA contacts are provided by residues valine 118, 125 to 126 (RY), serine 274, and arginine 311. Arginine 338 serves as the catalytic Proton acceptor. Glyoxylate is bound by residues arginine 338, glutamate 427, and 452–455 (GFLD). Mg(2+) contacts are provided by glutamate 427 and aspartate 455. Proline 536 serves as a coordination point for acetyl-CoA. At cysteine 617 the chain carries Cysteine sulfenic acid (-SOH). The Proton donor role is filled by aspartate 631. The residue at position 688 (cysteine 688) is a Cysteine sulfenic acid (-SOH).

It belongs to the malate synthase family. GlcB subfamily. In terms of assembly, monomer. It depends on Mg(2+) as a cofactor.

Its subcellular location is the cytoplasm. It carries out the reaction glyoxylate + acetyl-CoA + H2O = (S)-malate + CoA + H(+). Its pathway is carbohydrate metabolism; glyoxylate cycle; (S)-malate from isocitrate: step 2/2. In terms of biological role, involved in the glycolate utilization. Catalyzes the condensation and subsequent hydrolysis of acetyl-coenzyme A (acetyl-CoA) and glyoxylate to form malate and CoA. In Shigella flexneri, this protein is Malate synthase G.